A 240-amino-acid chain; its full sequence is 1-(5-phosphoribosyl)-5-[(5-phosphoribosylamino)methylideneamino] imidazole-4-carboxamide isomerase (240 aa).

The Proton acceptor role is filled by Asp8. Residue Asp129 is the Proton donor of the active site.

This sequence belongs to the HisA/HisF family.

The protein resides in the cytoplasm. The catalysed reaction is 1-(5-phospho-beta-D-ribosyl)-5-[(5-phospho-beta-D-ribosylamino)methylideneamino]imidazole-4-carboxamide = 5-[(5-phospho-1-deoxy-D-ribulos-1-ylimino)methylamino]-1-(5-phospho-beta-D-ribosyl)imidazole-4-carboxamide. It functions in the pathway amino-acid biosynthesis; L-histidine biosynthesis; L-histidine from 5-phospho-alpha-D-ribose 1-diphosphate: step 4/9. This Herpetosiphon aurantiacus (strain ATCC 23779 / DSM 785 / 114-95) protein is 1-(5-phosphoribosyl)-5-[(5-phosphoribosylamino)methylideneamino] imidazole-4-carboxamide isomerase.